Here is a 147-residue protein sequence, read N- to C-terminus: MVHLSGSEKTAVTNLWGHVNVNELGGEALGRLLVVYPWTQRFFESFGDLSSADAVMGNAKVKAHGAKVLTSFGDALKNLDNLKGTFAKLSELHCDKLHVDPENFNRLGNVLVVVLARHFSKEFTPEAQAAWQKLVSGVSHALAHKYH.

At V2 the chain carries N-acetylvaline. Residues 3–147 form the Globin domain; the sequence is HLSGSEKTAV…VSHALAHKYH (145 aa). T13 bears the Phosphothreonine mark. Position 45 is a phosphoserine (S45). K60 carries the post-translational modification N6-acetyllysine. A heme b-binding site is contributed by H64. Position 83 is an N6-acetyllysine (K83). H93 provides a ligand contact to heme b. C94 carries the post-translational modification S-nitrosocysteine. An N6-acetyllysine modification is found at K145.

The protein belongs to the globin family. As to quaternary structure, heterotetramer of two alpha chains and two beta chains. In terms of tissue distribution, red blood cells.

Functionally, involved in oxygen transport from the lung to the various peripheral tissues. This chain is Hemoglobin subunit beta (HBB), found in Tachyglossus aculeatus aculeatus (Southeast Australian short-beaked echidna).